The chain runs to 250 residues: 2,3-bisphosphoglycerate-dependent phosphoglycerate mutase (250 aa).

Substrate-binding positions include 8-15 (RHGESEWN), 21-22 (TG), Arg60, 87-90 (ERHY), Lys98, 114-115 (RR), and 183-184 (GN). His9 functions as the Tele-phosphohistidine intermediate in the catalytic mechanism. Glu87 serves as the catalytic Proton donor/acceptor.

Belongs to the phosphoglycerate mutase family. BPG-dependent PGAM subfamily.

It catalyses the reaction (2R)-2-phosphoglycerate = (2R)-3-phosphoglycerate. The protein operates within carbohydrate degradation; glycolysis; pyruvate from D-glyceraldehyde 3-phosphate: step 3/5. Its function is as follows. Catalyzes the interconversion of 2-phosphoglycerate and 3-phosphoglycerate. In Borrelia duttonii (strain Ly), this protein is 2,3-bisphosphoglycerate-dependent phosphoglycerate mutase.